Here is a 150-residue protein sequence, read N- to C-terminus: Large ribosomal subunit protein bL9 (150 aa).

The protein belongs to the bacterial ribosomal protein bL9 family.

Its function is as follows. Binds to the 23S rRNA. The sequence is that of Large ribosomal subunit protein bL9 from Arthrobacter sp. (strain FB24).